Reading from the N-terminus, the 407-residue chain is Substance-P receptor (407 aa).

Residues 1-31 are Extracellular-facing; that stretch reads MDNVLPVDSDLSPNISTNTSEPNQFVQPAWQ. Asn-14 and Asn-18 each carry an N-linked (GlcNAc...) asparagine glycan. A helical membrane pass occupies residues 32-54; the sequence is IVLWAAAYTVIVVTSVVGNVVVM. At 55 to 64 the chain is on the cytoplasmic side; the sequence is WIILAHKRMR. A helical membrane pass occupies residues 65–86; it reads TVTNYFLVNLAFAEASMAAFNT. Residues 87–106 lie on the Extracellular side of the membrane; it reads VVNFTYAVHNEWYYGLFYCK. Cys-105 and Cys-180 are joined by a disulfide. Residues 107 to 128 traverse the membrane as a helical segment; that stretch reads FHNFFPIAAVFASIYSMTAVAF. The Cytoplasmic portion of the chain corresponds to 129–148; that stretch reads DRYMAIIHPLQPRLSATATK. The helical transmembrane segment at 149 to 169 threads the bilayer; sequence VVICVIWVLALLLAFPQGYYS. The Extracellular segment spans residues 170–194; that stretch reads TTETMPSRVVCMIEWPEHPNKIYEK. Residues 195-219 form a helical membrane-spanning segment; the sequence is VYHICVTVLIYFLPLLVIGYAYTVV. His-197 contributes to the CP-96345 binding site. Residues 220–248 are Cytoplasmic-facing; the sequence is GITLWASEIPGDSSDRYHEQVSAKRKVVK. Residues 249 to 270 traverse the membrane as a helical segment; it reads MMIVVVCTFAICWLPFHIFFLL. Residues 271–283 lie on the Extracellular side of the membrane; sequence PYINPDLYLKKFI. The helical transmembrane segment at 284-308 threads the bilayer; the sequence is QQVYLAIMWLAMSSTMYNPIIYCCL. Residues 309-407 are Cytoplasmic-facing; sequence NDRFRLGFKH…SFSFSSNVLS (99 aa). Cys-322 carries S-palmitoyl cysteine lipidation. The tract at residues 364–407 is disordered; the sequence is AHEEEPEDGPKATPSSLDLTSNCSSRSDSKTMTESFSFSSNVLS. Residues 376–407 show a composition bias toward polar residues; that stretch reads TPSSLDLTSNCSSRSDSKTMTESFSFSSNVLS.

It belongs to the G-protein coupled receptor 1 family. In terms of assembly, interacts with ARRB1.

It is found in the cell membrane. Its function is as follows. This is a receptor for the tachykinin neuropeptide substance P. It is probably associated with G proteins that activate a phosphatidylinositol-calcium second messenger system. The rank order of affinity of this receptor to tachykinins is: substance P &gt; substance K &gt; neuromedin-K. This chain is Substance-P receptor (TACR1), found in Homo sapiens (Human).